The following is a 272-amino-acid chain: Imidazole glycerol phosphate synthase subunit HisF (272 aa).

Active-site residues include D11 and D130.

The protein belongs to the HisA/HisF family. Heterodimer of HisH and HisF.

It is found in the cytoplasm. It carries out the reaction 5-[(5-phospho-1-deoxy-D-ribulos-1-ylimino)methylamino]-1-(5-phospho-beta-D-ribosyl)imidazole-4-carboxamide + L-glutamine = D-erythro-1-(imidazol-4-yl)glycerol 3-phosphate + 5-amino-1-(5-phospho-beta-D-ribosyl)imidazole-4-carboxamide + L-glutamate + H(+). It participates in amino-acid biosynthesis; L-histidine biosynthesis; L-histidine from 5-phospho-alpha-D-ribose 1-diphosphate: step 5/9. Its function is as follows. IGPS catalyzes the conversion of PRFAR and glutamine to IGP, AICAR and glutamate. The HisF subunit catalyzes the cyclization activity that produces IGP and AICAR from PRFAR using the ammonia provided by the HisH subunit. This chain is Imidazole glycerol phosphate synthase subunit HisF, found in Methanococcus maripaludis (strain C7 / ATCC BAA-1331).